The chain runs to 286 residues: 4-hydroxybenzoate octaprenyltransferase (286 aa).

Helical transmembrane passes span 21-40 (GTLL…AGGM), 95-115 (ILFV…NGLV), 142-162 (FLGV…TGEV), 167-187 (WWLF…YAMV), 211-231 (IIGL…WSAE), 235-255 (LYGL…MLIF), and 266-286 (FLNN…DYLI).

This sequence belongs to the UbiA prenyltransferase family. It depends on Mg(2+) as a cofactor.

The protein resides in the cell inner membrane. It catalyses the reaction all-trans-octaprenyl diphosphate + 4-hydroxybenzoate = 4-hydroxy-3-(all-trans-octaprenyl)benzoate + diphosphate. It functions in the pathway cofactor biosynthesis; ubiquinone biosynthesis. Its function is as follows. Catalyzes the prenylation of para-hydroxybenzoate (PHB) with an all-trans polyprenyl group. Mediates the second step in the final reaction sequence of ubiquinone-8 (UQ-8) biosynthesis, which is the condensation of the polyisoprenoid side chain with PHB, generating the first membrane-bound Q intermediate 3-octaprenyl-4-hydroxybenzoate. In Shewanella putrefaciens (strain CN-32 / ATCC BAA-453), this protein is 4-hydroxybenzoate octaprenyltransferase.